The sequence spans 262 residues: Type III pantothenate kinase (262 aa).

12–19 (DIGNTSIA) contributes to the ATP binding site. Substrate-binding positions include Tyr94 and 109–112 (GSDV). The active-site Proton acceptor is the Asp111. Position 132 (Asp132) interacts with K(+). Thr135 is an ATP binding site. Substrate is bound at residue Thr187.

This sequence belongs to the type III pantothenate kinase family. As to quaternary structure, homodimer. Requires NH4(+) as cofactor. K(+) is required as a cofactor.

It localises to the cytoplasm. The catalysed reaction is (R)-pantothenate + ATP = (R)-4'-phosphopantothenate + ADP + H(+). Its pathway is cofactor biosynthesis; coenzyme A biosynthesis; CoA from (R)-pantothenate: step 1/5. In terms of biological role, catalyzes the phosphorylation of pantothenate (Pan), the first step in CoA biosynthesis. The polypeptide is Type III pantothenate kinase (Borreliella burgdorferi (strain ATCC 35210 / DSM 4680 / CIP 102532 / B31) (Borrelia burgdorferi)).